The chain runs to 220 residues: UPF0643 protein PB2B2.08 (220 aa).

The protein belongs to the UPF0643 family.

The protein localises to the cytoplasm. It is found in the nucleus. The protein is UPF0643 protein PB2B2.08 of Schizosaccharomyces pombe (strain 972 / ATCC 24843) (Fission yeast).